The following is a 227-amino-acid chain: Isopentenyl-diphosphate Delta-isomerase 1 (227 aa).

Lys36 is a binding site for substrate. Residues His40 and His51 each contribute to the Mg(2+) site. A Nudix hydrolase domain is found at 49 to 199; it reads LLHRAFSVFL…EIKLTPWFKI (151 aa). The substrate site is built by Arg70 and Lys74. Cys86 is an active-site residue. Ser87 provides a ligand contact to substrate. Residues Glu146 and Glu148 each coordinate Mg(2+). The active site involves Glu148. The residue at position 176 (Lys176) is an N6-acetyllysine. The Microbody targeting signal motif lies at 225–227; sequence HRL.

It belongs to the IPP isomerase type 1 family. Monomer. Requires Mg(2+) as cofactor.

Its subcellular location is the peroxisome. The enzyme catalyses isopentenyl diphosphate = dimethylallyl diphosphate. It functions in the pathway isoprenoid biosynthesis; dimethylallyl diphosphate biosynthesis; dimethylallyl diphosphate from isopentenyl diphosphate: step 1/1. Functionally, catalyzes the 1,3-allylic rearrangement of the homoallylic substrate isopentenyl (IPP) to its highly electrophilic allylic isomer, dimethylallyl diphosphate (DMAPP). This chain is Isopentenyl-diphosphate Delta-isomerase 1 (Idi1), found in Mus musculus (Mouse).